The primary structure comprises 70 residues: DNA gyrase inhibitor YacG (70 aa).

4 residues coordinate Zn(2+): Cys-20, Cys-23, Cys-35, and Cys-39.

Belongs to the DNA gyrase inhibitor YacG family. As to quaternary structure, interacts with GyrB. It depends on Zn(2+) as a cofactor.

In terms of biological role, inhibits all the catalytic activities of DNA gyrase by preventing its interaction with DNA. Acts by binding directly to the C-terminal domain of GyrB, which probably disrupts DNA binding by the gyrase. The chain is DNA gyrase inhibitor YacG from Rhizobium etli (strain CIAT 652).